Consider the following 309-residue polypeptide: Aspartate carbamoyltransferase catalytic subunit (309 aa).

Carbamoyl phosphate contacts are provided by Arg-48 and Thr-49. Lys-76 contacts L-aspartate. The carbamoyl phosphate site is built by Arg-98, His-128, and Gln-131. Residues Arg-161 and Arg-211 each contribute to the L-aspartate site. Ala-250 and Pro-251 together coordinate carbamoyl phosphate.

This sequence belongs to the aspartate/ornithine carbamoyltransferase superfamily. ATCase family. Heterododecamer (2C3:3R2) of six catalytic PyrB chains organized as two trimers (C3), and six regulatory PyrI chains organized as three dimers (R2).

The catalysed reaction is carbamoyl phosphate + L-aspartate = N-carbamoyl-L-aspartate + phosphate + H(+). It participates in pyrimidine metabolism; UMP biosynthesis via de novo pathway; (S)-dihydroorotate from bicarbonate: step 2/3. Catalyzes the condensation of carbamoyl phosphate and aspartate to form carbamoyl aspartate and inorganic phosphate, the committed step in the de novo pyrimidine nucleotide biosynthesis pathway. The sequence is that of Aspartate carbamoyltransferase catalytic subunit from Oceanobacillus iheyensis (strain DSM 14371 / CIP 107618 / JCM 11309 / KCTC 3954 / HTE831).